A 531-amino-acid polypeptide reads, in one-letter code: O-phosphoserine--tRNA(Cys) ligase (531 aa).

Residues 189–191, 234–236, 276–277, and asparagine 319 contribute to the substrate site; these read HMT, SAS, and YY.

It belongs to the class-II aminoacyl-tRNA synthetase family. O-phosphoseryl-tRNA(Cys) synthetase subfamily. Homotetramer. Interacts with SepCysS.

The catalysed reaction is tRNA(Cys) + O-phospho-L-serine + ATP = O-phospho-L-seryl-tRNA(Cys) + AMP + diphosphate. Functionally, catalyzes the attachment of O-phosphoserine (Sep) to tRNA(Cys). This chain is O-phosphoserine--tRNA(Cys) ligase, found in Methanoculleus marisnigri (strain ATCC 35101 / DSM 1498 / JR1).